Reading from the N-terminus, the 377-residue chain is MEFIKNLQPNKSYWITCKLSEINHIVHMISKQNHLKTTRYSSECLDDVYDGTSLVFDIDPPIWVFKQMIKDGNLSVSCPDHMKTEEVENIAKIVVSHKDPEEFYCVTINGFSLDGVIKNQMTVVKNGQLKKEDKSRERVVEAAEQFYKNKKIASNETLANETTSKPPLENGVPMYFQPPDIEPFPLKNRVPTDTDEKKDFFRGLVQGIFKDYINGIEGAMNDMKNSLPIFLAILTQEDERDKKDYAGTFWVGCRDKFVRFITHGSVNVLRHCNLKREHLAVAMFNSNMSYRPPVIRDMIINDIIHDNPHVYKDIPPWNVSVEVNKFLSRYSAANELEIDRRWNKKYTAKPRQGQKRKADVNDEDGYRRIQKSFEGLF.

This is an uncharacterized protein from Magallana gigas (Pacific oyster).